The primary structure comprises 226 residues: Transcriptional regulatory protein PcoR (226 aa).

The region spanning 3-117 (RILIVEDEQK…ELVARVRTLL (115 aa)) is the Response regulatory domain. A 4-aspartylphosphate modification is found at aspartate 52. The ompR/PhoB-type DNA-binding region spans 125 to 223 (ATVCTIADMT…VRGAGYVLEI (99 aa)).

Phosphorylated by PcoS.

The protein localises to the cytoplasm. In terms of biological role, probable member of a two-component regulatory system PcoS/PcoR. May be involved in the activation of copper resistance gene operon pcoABCD by binding to a specific site on the cop operon promoter (copper box). The chain is Transcriptional regulatory protein PcoR (pcoR) from Escherichia coli.